The primary structure comprises 550 residues: Chaperonin GroEL (550 aa).

ATP is bound by residues 30 to 33, Lys51, 87 to 91, Gly415, 481 to 483, and Asp497; these read TLGP, DGTTT, and NAA.

Belongs to the chaperonin (HSP60) family. As to quaternary structure, forms a cylinder of 14 subunits composed of two heptameric rings stacked back-to-back. Interacts with the co-chaperonin GroES.

Its subcellular location is the cytoplasm. The catalysed reaction is ATP + H2O + a folded polypeptide = ADP + phosphate + an unfolded polypeptide.. Together with its co-chaperonin GroES, plays an essential role in assisting protein folding. The GroEL-GroES system forms a nano-cage that allows encapsulation of the non-native substrate proteins and provides a physical environment optimized to promote and accelerate protein folding. The chain is Chaperonin GroEL from Photobacterium profundum (strain SS9).